Here is a 225-residue protein sequence, read N- to C-terminus: AA9 family lytic polysaccharide monooxygenase A (225 aa).

Residues 1–17 form the signal peptide; it reads MLTTTFALLTAALGVSA. Cu(2+) contacts are provided by His-18 and His-85. 2 disulfide bridges follow: Cys-55/Cys-173 and Cys-143/Cys-225. O2 is bound by residues His-159 and Gln-168. Tyr-170 contacts Cu(2+).

This sequence belongs to the polysaccharide monooxygenase AA9 family. The cofactor is Cu(2+).

It is found in the secreted. It carries out the reaction [(1-&gt;4)-beta-D-glucosyl]n+m + reduced acceptor + O2 = 4-dehydro-beta-D-glucosyl-[(1-&gt;4)-beta-D-glucosyl]n-1 + [(1-&gt;4)-beta-D-glucosyl]m + acceptor + H2O.. Its activity is regulated as follows. Is able to utilize various natural phenolic compounds as reducing agents. Most of these reducing agents are present in plants, either free or as lignin building blocks, such as sinapic acid, or as flavonoids such as catechin and dopamine. Phenolic compounds with 1,2-benzenediol and 1,2,3-benzenetriol moieties yield the highest release of oxidized and non-oxidized glucooligosaccharides from cellulose compared to monophenols or sulfur-containing compounds. Its function is as follows. Lytic polysaccharide monooxygenase (LPMO) that depolymerizes crystalline and amorphous polysaccharides via the oxidation of scissile alpha- or beta-(1-4)-glycosidic bonds, yielding C1 or C4 oxidation products. Catalysis by LPMOs requires the reduction of the active-site copper from Cu(II) to Cu(I) by a reducing agent and H(2)O(2) or O(2) as a cosubstrate. Shows oxidative cleavage of xylan in addition to cellulose. Shows a strong synergistic effect with endoglucanase I (EGI) with a 16-fold higher release of detected oligosaccharides. This Thermothelomyces thermophilus (strain ATCC 42464 / BCRC 31852 / DSM 1799) (Sporotrichum thermophile) protein is AA9 family lytic polysaccharide monooxygenase A.